The chain runs to 1713 residues: uncharacterized protein (1713 aa).

The span at 1–12 (MNENEFSTNSLI) shows a compositional bias: polar residues. 7 disordered regions span residues 1 to 35 (MNEN…INFG), 79 to 200 (QQLN…KLSN), 226 to 290 (GNNN…QPLS), 309 to 557 (QYLS…PMSH), 713 to 734 (SNDQ…KKDR), 808 to 952 (SPPM…SITT), and 1143 to 1190 (HHHH…SISR). Low complexity-rich tracts occupy residues 13 to 35 (NQQG…INFG), 79 to 109 (QQLN…NNNN), 126 to 170 (NNSG…NSGN), 177 to 200 (NMSD…KLSN), and 226 to 264 (GNNN…GGNN). The segment covering 265–276 (SHHHHNHSHHNS) has biased composition (basic residues). 2 stretches are compositionally biased toward low complexity: residues 317-470 (NNIN…SPAS) and 478-489 (SNNFGGNHNNYN). Residues 490 to 504 (HAHHSHHNNHAHHNT) show a composition bias toward basic residues. The span at 505–553 (HNYNNNNNNNNNNNNNNNNNNNNSNNSNNNSNTNNNGNNGNNSNNNNNH) shows a compositional bias: low complexity. Residues 544–825 (GNNSNNNNNH…QNPGRFLNHD (282 aa)) constitute a DNA-binding region (NDT80). Residues 822–832 (LNHDKSLKKDP) show a composition bias toward basic and acidic residues. A compositionally biased stretch (gly residues) spans 838-874 (GGKGGGGSGSGGMGGGMGGGMGNNGSSGSSSNGGYGN). Low complexity-rich tracts occupy residues 898–946 (SPTT…PTLT) and 1148–1189 (QQQQ…SSIS). Positions 1240-1355 (SDQRIKSNIR…RSLKKEKDHI (116 aa)) constitute a Peptidase S74 domain. Helical transmembrane passes span 1416 to 1436 (TMFV…FYLF), 1447 to 1467 (LMNF…TFYV), and 1473 to 1493 (LIIA…VGFF). Residues 1596–1605 (NSNNNINNNN) show a composition bias toward low complexity. Disordered stretches follow at residues 1596–1634 (NSNN…DFHE) and 1646–1665 (IKGK…SSSN). A compositionally biased stretch (basic and acidic residues) spans 1617 to 1634 (FIDDFKKSSSNNHKDFHE).

The protein resides in the membrane. This is an uncharacterized protein from Dictyostelium discoideum (Social amoeba).